The sequence spans 31 residues: MPTITSYFGFLLAASTITPALLIGLSKIRLI.

A helical transmembrane segment spans residues 4–26; it reads ITSYFGFLLAASTITPALLIGLS.

This sequence belongs to the PetL family. In terms of assembly, the 4 large subunits of the cytochrome b6-f complex are cytochrome b6, subunit IV (17 kDa polypeptide, PetD), cytochrome f and the Rieske protein, while the 4 small subunits are PetG, PetL, PetM and PetN. The complex functions as a dimer.

The protein resides in the plastid. It localises to the chloroplast thylakoid membrane. Its function is as follows. Component of the cytochrome b6-f complex, which mediates electron transfer between photosystem II (PSII) and photosystem I (PSI), cyclic electron flow around PSI, and state transitions. PetL is important for photoautotrophic growth as well as for electron transfer efficiency and stability of the cytochrome b6-f complex. The protein is Cytochrome b6-f complex subunit 6 of Illicium oligandrum (Star anise).